The sequence spans 133 residues: Small ribosomal subunit protein uS8 (133 aa).

This sequence belongs to the universal ribosomal protein uS8 family. In terms of assembly, part of the 30S ribosomal subunit. Contacts proteins S5 and S12.

Functionally, one of the primary rRNA binding proteins, it binds directly to 16S rRNA central domain where it helps coordinate assembly of the platform of the 30S subunit. The protein is Small ribosomal subunit protein uS8 of Chlorobaculum parvum (strain DSM 263 / NCIMB 8327) (Chlorobium vibrioforme subsp. thiosulfatophilum).